The following is a 113-amino-acid chain: UPF0482 protein YnfB (113 aa).

Residues 1-28 (MKITLSKRIGLLAFLLPCALALSTTVHA) form the signal peptide.

Belongs to the UPF0482 family.

This Shigella dysenteriae serotype 1 (strain Sd197) protein is UPF0482 protein YnfB.